The following is a 294-amino-acid chain: uncharacterized protein (294 aa).

This is an uncharacterized protein from Halobacterium salinarum (strain ATCC 700922 / JCM 11081 / NRC-1) (Halobacterium halobium).